Reading from the N-terminus, the 216-residue chain is Octanoyltransferase (216 aa).

The 179-residue stretch at 35 to 213 folds into the BPL/LPL catalytic domain; sequence NSNPDFIWIG…IIQEEFNFDF (179 aa). Residues 77 to 84, 144 to 146, and 157 to 159 each bind substrate; these read RGGEVTCH, SIG, and GFS. The active-site Acyl-thioester intermediate is the C175.

It belongs to the LipB family.

It localises to the cytoplasm. It carries out the reaction octanoyl-[ACP] + L-lysyl-[protein] = N(6)-octanoyl-L-lysyl-[protein] + holo-[ACP] + H(+). The protein operates within protein modification; protein lipoylation via endogenous pathway; protein N(6)-(lipoyl)lysine from octanoyl-[acyl-carrier-protein]: step 1/2. Its function is as follows. Catalyzes the transfer of endogenously produced octanoic acid from octanoyl-acyl-carrier-protein onto the lipoyl domains of lipoate-dependent enzymes. Lipoyl-ACP can also act as a substrate although octanoyl-ACP is likely to be the physiological substrate. In Prochlorococcus marinus (strain MIT 9312), this protein is Octanoyltransferase.